An 801-amino-acid chain; its full sequence is Endonuclease MutS2 (801 aa).

Position 336–343 (G336–T343) interacts with ATP. Residues A696–T721 form a disordered region. Residues A701–K710 are compositionally biased toward basic residues. A Smr domain is found at L726–S801.

The protein belongs to the DNA mismatch repair MutS family. MutS2 subfamily. As to quaternary structure, homodimer. Binds to stalled ribosomes, contacting rRNA.

Its function is as follows. Endonuclease that is involved in the suppression of homologous recombination and thus may have a key role in the control of bacterial genetic diversity. Acts as a ribosome collision sensor, splitting the ribosome into its 2 subunits. Detects stalled/collided 70S ribosomes which it binds and splits by an ATP-hydrolysis driven conformational change. Acts upstream of the ribosome quality control system (RQC), a ribosome-associated complex that mediates the extraction of incompletely synthesized nascent chains from stalled ribosomes and their subsequent degradation. Probably generates substrates for RQC. This chain is Endonuclease MutS2, found in Leuconostoc citreum (strain KM20).